Reading from the N-terminus, the 103-residue chain is Leukocyte cysteine proteinase inhibitor 1 (103 aa).

A Blocked amino end (Met); partial modification is found at Met1. Residues 1 to 20 are disordered; the sequence is MESEEMLAGGLTEPRPATPE. The Secondary area of contact motif lies at 51 to 55; that stretch reads QVVAG.

This sequence belongs to the cystatin family.

Its subcellular location is the cytoplasm. Functionally, potent inhibitor of cathepsins L and S, and papain. The polypeptide is Leukocyte cysteine proteinase inhibitor 1 (Sus scrofa (Pig)).